We begin with the raw amino-acid sequence, 355 residues long: METATTLEIASCSQRQVEAAADPADAKGPRTSHQQEAGSPSLQLLPSIEEHPKIWLPRALKQTYIRKAGETVNLLIPIQGKPKPQTTWTHNGCALDSSRVSVRNGEHDSILFIREAQRTDSGCYQLCVQLGGLQATATINILVIEKPGPPQSIKLVDVWGANATLEWTPPQDTGNTALLGYTVQKADKKSGLWFTVLERYHRTSCVVSNLIVGNSYAFRVFAENQCGLSDTAPVTADLAHIQKAATVYKAKGFAQRDLSEAPKFTQPLADCTTVTGYDTQLFCCVRASPRPKIIWLKNKMDLQGNPKYRALSQLGICSLEIRKPSPFDGGIYTCKAINALGEASVDCRVDVKAPH.

Polar residues-rich tracts occupy residues 1–16 (METATTLEIASCSQRQ) and 31–41 (TSHQQEAGSPS). Residues 1 to 41 (METATTLEIASCSQRQVEAAADPADAKGPRTSHQQEAGSPS) form a disordered region. Ser39 carries the phosphoserine modification. Residues 46–140 (PSIEEHPKIW…GGLQATATIN (95 aa)) form the Ig-like C2-type 1 domain. Residues 149 to 244 (PPQSIKLVDV…TADLAHIQKA (96 aa)) form the Fibronectin type-III domain. Positions 262–346 (PKFTQPLADC…INALGEASVD (85 aa)) constitute an Ig-like C2-type 2 domain. Residues Cys283 and Cys334 are joined by a disulfide bond. Arg322 is subject to Omega-N-methylarginine.

It belongs to the immunoglobulin superfamily. MyBP family. Expressed in the atria as well as in discrete puncta throughout the right ventricular wall and septum.

It is found in the cytoplasm. The protein resides in the myofibril. It localises to the sarcomere. Functionally, myosin-binding protein which plays a role in cardiac function. Seems to regulate conduction in the atria and ventricular conduction systems. This chain is Myosin-binding protein H-like, found in Mus musculus (Mouse).